We begin with the raw amino-acid sequence, 500 residues long: Lycopene beta cyclase, chloroplastic (500 aa).

A chloroplast-targeting transit peptide spans 1–81; the sequence is MDTLLKTPNN…ELPMYDPSKG (81 aa). 86–114 is a binding site for NAD(+); that stretch reads LAVVGGGPAGLAVAQQVSEAGLSVCSIDP.

It belongs to the lycopene cyclase family.

It is found in the plastid. The protein localises to the chloroplast. The enzyme catalyses a carotenoid psi-end group = a carotenoid beta-end derivative. It participates in carotenoid biosynthesis; beta-carotene biosynthesis. It functions in the pathway carotenoid biosynthesis; beta-zeacarotene biosynthesis. Its function is as follows. Catalyzes the double cyclization reaction which converts lycopene to beta-carotene and neurosporene to beta-zeacarotene. This chain is Lycopene beta cyclase, chloroplastic (LCY1), found in Solanum lycopersicum (Tomato).